Reading from the N-terminus, the 97-residue chain is Cobalt transport protein CbiN (97 aa).

The next 2 membrane-spanning stretches (helical) occupy residues 6–26 and 68–88; these read VLMI…YSGL and SLLF…FFGY.

This sequence belongs to the CbiN family. As to quaternary structure, forms an energy-coupling factor (ECF) transporter complex composed of an ATP-binding protein (A component, CbiO), a transmembrane protein (T component, CbiQ) and 2 possible substrate-capture proteins (S components, CbiM and CbiN) of unknown stoichimetry.

The protein resides in the cell membrane. The protein operates within cofactor biosynthesis; adenosylcobalamin biosynthesis. Its function is as follows. Part of the energy-coupling factor (ECF) transporter complex CbiMNOQ involved in cobalt import. In Methanococcus maripaludis (strain C6 / ATCC BAA-1332), this protein is Cobalt transport protein CbiN.